A 498-amino-acid chain; its full sequence is ADP,ATP carrier protein 1 (498 aa).

Over M1–F33 the chain is Cytoplasmic. The chain crosses the membrane as a helical span at residues M34–V54. C37 and C85 form a disulfide bridge. The Extracellular segment spans residues T55–T67. A helical membrane pass occupies residues Y68 to L88. The Cytoplasmic portion of the chain corresponds to K89–N92. The helical transmembrane segment at V93–Y113 threads the bilayer. At P114 to S147 the chain is on the extracellular side. The helical transmembrane segment at F148–W168 threads the bilayer. At Q169–Y184 the chain is on the cytoplasmic side. A helical membrane pass occupies residues S185–C205. At L206–K218 the chain is on the extracellular side. A helical transmembrane segment spans residues F219–W239. The Cytoplasmic segment spans residues M240–Y279. The helical transmembrane segment at V280–V300 threads the bilayer. Over W301–G320 the chain is Extracellular. A helical membrane pass occupies residues K321–L341. The Cytoplasmic portion of the chain corresponds to R342–T348. The helical transmembrane segment at A349–F369 threads the bilayer. Topologically, residues F370–T379 are extracellular. A helical membrane pass occupies residues G380 to L400. Residues S401–R438 are Cytoplasmic-facing. G436 to S442 is a binding site for ATP. The helical transmembrane segment at F439–G459 threads the bilayer. Topologically, residues F460–P465 are extracellular. A helical membrane pass occupies residues Y466–N486. The Cytoplasmic portion of the chain corresponds to K487–K498.

This sequence belongs to the ADP/ATP translocase tlc family.

It localises to the cell membrane. Its function is as follows. Provides the rickettsial cell with host ATP in exchange for rickettsial ADP. This is an obligate exchange system. This energy acquiring activity is an important component of rickettsial parasitism. The polypeptide is ADP,ATP carrier protein 1 (tlcA) (Rickettsia conorii (strain ATCC VR-613 / Malish 7)).